Consider the following 486-residue polypeptide: MTKRLSDLFNRPFATDPVIAGVTADSRKVTTGWLFAALPGTKVDGRDFAEGAVAKGAAAILAPEGGLEGLGVPVVRSEDARRAYALAAAAFWGKQPAMCVAVTGTNGKTSVAGFCRQIFTKLGHKAASMGTLGVVVSQPGQPDQQLTPPGLTTPDAGDVAEMIARLADMGVTHLALEASSHGVDQRRIDGVKLSAAGFTNFTQDHLDYHGSMEAYRAAKLRLFDTLTPAGAMAVLNADSEAFPDFAAAAVTSGQSVFSVGEEGQGLRLLSRTPTPAGQDLVVEAEGVVHHLKLPLAGAFQASNVLVAAGLCIAAGEDSAKVLKALETLEGAAGRLQRVGRGPKGGEAYVDYAHTPDGLQTVLEALRPHTAGKLIAVFGAGGDRDRGKRPLMGAIGAKLADIAIVTDDNPRSEDPASIRAAILEAAPGAREIGDRRAAIRAAVALMSEGDVLVVAGKGHEQGQIVAGVVHPFDDVAETLQALEGVDA.

Residue serine 26 participates in UDP-N-acetyl-alpha-D-muramoyl-L-alanyl-D-glutamate binding. Residue 104–110 (GTNGKTS) participates in ATP binding. UDP-N-acetyl-alpha-D-muramoyl-L-alanyl-D-glutamate contacts are provided by residues 152 to 153 (TT), serine 179, glutamine 185, and arginine 187. Lysine 219 is modified (N6-carboxylysine). Meso-2,6-diaminopimelate contacts are provided by residues arginine 383, 407-410 (DNPR), glycine 455, and glutamate 459. The short motif at 407–410 (DNPR) is the Meso-diaminopimelate recognition motif element.

Belongs to the MurCDEF family. MurE subfamily. Requires Mg(2+) as cofactor. In terms of processing, carboxylation is probably crucial for Mg(2+) binding and, consequently, for the gamma-phosphate positioning of ATP.

It is found in the cytoplasm. The enzyme catalyses UDP-N-acetyl-alpha-D-muramoyl-L-alanyl-D-glutamate + meso-2,6-diaminopimelate + ATP = UDP-N-acetyl-alpha-D-muramoyl-L-alanyl-gamma-D-glutamyl-meso-2,6-diaminopimelate + ADP + phosphate + H(+). The protein operates within cell wall biogenesis; peptidoglycan biosynthesis. Its function is as follows. Catalyzes the addition of meso-diaminopimelic acid to the nucleotide precursor UDP-N-acetylmuramoyl-L-alanyl-D-glutamate (UMAG) in the biosynthesis of bacterial cell-wall peptidoglycan. The sequence is that of UDP-N-acetylmuramoyl-L-alanyl-D-glutamate--2,6-diaminopimelate ligase from Caulobacter vibrioides (strain ATCC 19089 / CIP 103742 / CB 15) (Caulobacter crescentus).